A 72-amino-acid polypeptide reads, in one-letter code: Translation initiation factor IF-1 (72 aa).

The region spanning 1–72 (MAKEDTLEFP…TKGRINYRFK (72 aa)) is the S1-like domain.

It belongs to the IF-1 family. Component of the 30S ribosomal translation pre-initiation complex which assembles on the 30S ribosome in the order IF-2 and IF-3, IF-1 and N-formylmethionyl-tRNA(fMet); mRNA recruitment can occur at any time during PIC assembly.

Its subcellular location is the cytoplasm. Its function is as follows. One of the essential components for the initiation of protein synthesis. Stabilizes the binding of IF-2 and IF-3 on the 30S subunit to which N-formylmethionyl-tRNA(fMet) subsequently binds. Helps modulate mRNA selection, yielding the 30S pre-initiation complex (PIC). Upon addition of the 50S ribosomal subunit IF-1, IF-2 and IF-3 are released leaving the mature 70S translation initiation complex. The chain is Translation initiation factor IF-1 from Ruegeria sp. (strain TM1040) (Silicibacter sp.).